A 278-amino-acid polypeptide reads, in one-letter code: 4-deoxy-L-threo-5-hexosulose-uronate ketol-isomerase (278 aa).

Positions 196, 198, 203, and 245 each coordinate Zn(2+).

It belongs to the KduI family. Homohexamer. The cofactor is Zn(2+).

The enzyme catalyses 5-dehydro-4-deoxy-D-glucuronate = 3-deoxy-D-glycero-2,5-hexodiulosonate. The protein operates within glycan metabolism; pectin degradation; 2-dehydro-3-deoxy-D-gluconate from pectin: step 4/5. Catalyzes the isomerization of 5-dehydro-4-deoxy-D-glucuronate to 3-deoxy-D-glycero-2,5-hexodiulosonate. The chain is 4-deoxy-L-threo-5-hexosulose-uronate ketol-isomerase from Escherichia coli O139:H28 (strain E24377A / ETEC).